The following is a 320-amino-acid chain: Malate dehydrogenase 2 (320 aa).

NAD(+) is bound by residues 10–15 (GAGQIG) and aspartate 34. 2 residues coordinate substrate: arginine 83 and arginine 89. NAD(+) is bound by residues asparagine 96 and 119–121 (ITN). Substrate contacts are provided by asparagine 121 and arginine 152. Histidine 176 functions as the Proton acceptor in the catalytic mechanism.

It belongs to the LDH/MDH superfamily. MDH type 3 family.

The catalysed reaction is (S)-malate + NAD(+) = oxaloacetate + NADH + H(+). Catalyzes the reversible oxidation of malate to oxaloacetate. This chain is Malate dehydrogenase 2, found in Rhodopseudomonas palustris (strain BisB18).